Consider the following 139-residue polypeptide: Trafficking protein particle complex subunit 2-like protein (139 aa).

It belongs to the TRAPP small subunits family. Sedlin subfamily.

It is found in the cytoplasm. It localises to the perinuclear region. The protein localises to the endoplasmic reticulum. The protein resides in the golgi apparatus. Functionally, may play a role in vesicular transport from endoplasmic reticulum to Golgi. The protein is Trafficking protein particle complex subunit 2-like protein (trappc2l) of Xenopus tropicalis (Western clawed frog).